The following is a 264-amino-acid chain: Ribosomal RNA small subunit methyltransferase A (264 aa).

S-adenosyl-L-methionine contacts are provided by Asn-12, Leu-14, Gly-40, Glu-61, Asp-86, and Asn-105.

Belongs to the class I-like SAM-binding methyltransferase superfamily. rRNA adenine N(6)-methyltransferase family. RsmA subfamily.

It localises to the cytoplasm. It catalyses the reaction adenosine(1518)/adenosine(1519) in 16S rRNA + 4 S-adenosyl-L-methionine = N(6)-dimethyladenosine(1518)/N(6)-dimethyladenosine(1519) in 16S rRNA + 4 S-adenosyl-L-homocysteine + 4 H(+). Its function is as follows. Specifically dimethylates two adjacent adenosines (A1518 and A1519) in the loop of a conserved hairpin near the 3'-end of 16S rRNA in the 30S particle. May play a critical role in biogenesis of 30S subunits. The protein is Ribosomal RNA small subunit methyltransferase A of Fusobacterium nucleatum subsp. nucleatum (strain ATCC 25586 / DSM 15643 / BCRC 10681 / CIP 101130 / JCM 8532 / KCTC 2640 / LMG 13131 / VPI 4355).